The primary structure comprises 66 residues: MMRKLRVLIPEPKSRFLRVKCPNCGNEQTIFSHATFPVRCLSCGTELVYSMGGKAKIVGEVVRIMG.

The Zn(2+) site is built by Cys21, Cys24, Cys40, and Cys43. The segment at Cys21 to Cys43 adopts a C4-type zinc-finger fold.

It belongs to the eukaryotic ribosomal protein eS27 family. Part of the 30S ribosomal subunit. Requires Zn(2+) as cofactor.

This is Small ribosomal subunit protein eS27 from Saccharolobus solfataricus (strain ATCC 35092 / DSM 1617 / JCM 11322 / P2) (Sulfolobus solfataricus).